Reading from the N-terminus, the 177-residue chain is Nucleoside triphosphate/diphosphate phosphatase (177 aa).

Arginine 23 acts as the Proton donor in catalysis. Residues asparagine 87, aspartate 103, aspartate 105, aspartate 107, aspartate 120, and glutamate 123 each contribute to the Mg(2+) site.

It belongs to the Ntdp family. Mg(2+) serves as cofactor.

It carries out the reaction a ribonucleoside 5'-triphosphate + H2O = a ribonucleoside 5'-diphosphate + phosphate + H(+). It catalyses the reaction a ribonucleoside 5'-diphosphate + H2O = a ribonucleoside 5'-phosphate + phosphate + H(+). Functionally, has nucleoside phosphatase activity towards nucleoside triphosphates and nucleoside diphosphates. The polypeptide is Nucleoside triphosphate/diphosphate phosphatase (Streptococcus sanguinis (strain SK36)).